A 1287-amino-acid chain; its full sequence is DENN domain-containing protein 5A (1287 aa).

In terms of domain architecture, uDENN spans 57–259 (STTEGENFEQ…EVPLPPPGRS (203 aa)). Ser193 carries the phosphoserine modification. In terms of domain architecture, cDENN spans 278 to 414 (ELPLFDFPVK…LEFVQEVSEI (137 aa)). The dDENN domain maps to 416–598 (MAFGVPPEGN…IMCHDDDDKD (183 aa)). An RUN 1 domain is found at 787-950 (VEENTLIASL…DYFCFTNVFT (164 aa)). The 109-residue stretch at 954 to 1062 (IPYHILIVPS…DDGSLERVLV (109 aa)) folds into the PLAT domain. Thr1079 carries the phosphothreonine modification. Residues Ser1085, Ser1087, and Ser1096 each carry the phosphoserine modification. An RUN 2 domain is found at 1134 to 1280 (TLLLCGECGL…QEFNITLDTS (147 aa)).

The protein belongs to the RAB6IP1 family. In terms of assembly, interacts with RAB6A bound to GTP. Expressed in developing brain and developing neurons.

It is found in the golgi apparatus membrane. In terms of biological role, guanine nucleotide exchange factor (GEF) which may activate RAB6A and RAB39A and/or RAB39B. Promotes the exchange of GDP to GTP, converting inactive GDP-bound Rab proteins into their active GTP-bound form. Involved in the negative regulation of neurite outgrowth. This Rattus norvegicus (Rat) protein is DENN domain-containing protein 5A (Dennd5a).